The chain runs to 167 residues: uncharacterized protein (167 aa).

This is an uncharacterized protein from Acidianus bottle-shaped virus (isolate Italy/Pozzuoli) (ABV).